We begin with the raw amino-acid sequence, 168 residues long: Cytochrome c-type biogenesis protein CcmE (168 aa).

Residues 1 to 7 (MTRKKRR) lie on the Cytoplasmic side of the membrane. A helical; Signal-anchor for type II membrane protein transmembrane segment spans residues 8-28 (LYMLGLALLGLGTATALTLSA). Residues 29–168 (FEENIVFFYS…KVHATTTLKP (140 aa)) are Periplasmic-facing. Residues histidine 122 and tyrosine 126 each coordinate heme. The segment at 149-168 (SIYTPADSDDKVHATTTLKP) is disordered.

The protein belongs to the CcmE/CycJ family.

Its subcellular location is the cell inner membrane. Its function is as follows. Heme chaperone required for the biogenesis of c-type cytochromes. Transiently binds heme delivered by CcmC and transfers the heme to apo-cytochromes in a process facilitated by CcmF and CcmH. The chain is Cytochrome c-type biogenesis protein CcmE from Rhodospirillum centenum (strain ATCC 51521 / SW).